The chain runs to 295 residues: Putative fused nickel transport protein NikMN (295 aa).

8 consecutive transmembrane segments (helical) span residues 8–28 (LDLSIAGLFYILSIAVLGYSI), 39–59 (LFGIVAAAIFAAQMLNWPIPG), 70–90 (LAGILLGPYAGALAMAVVLTI), 98–118 (GGITALGANVWNMAIVNVFVG), 135–155 (FIAGWIGITLAAIFAGIEIGI), 175–195 (ALLGLVEGTITAGVVSYIAAA), 211–231 (LAVIAAMIAVSPLFAYAAELV), and 268–288 (AGTLIAGIVGTVIVLALGFAL).

The protein belongs to the CbiM family. NikM subfamily.

Its subcellular location is the cell membrane. Its function is as follows. May be involved in nickel transport. In Archaeoglobus fulgidus (strain ATCC 49558 / DSM 4304 / JCM 9628 / NBRC 100126 / VC-16), this protein is Putative fused nickel transport protein NikMN.